The chain runs to 577 residues: Arginine--tRNA ligase (577 aa).

Residues Pro122–His132 carry the 'HIGH' region motif.

It belongs to the class-I aminoacyl-tRNA synthetase family. Monomer.

Its subcellular location is the cytoplasm. The catalysed reaction is tRNA(Arg) + L-arginine + ATP = L-arginyl-tRNA(Arg) + AMP + diphosphate. The protein is Arginine--tRNA ligase of Citrobacter koseri (strain ATCC BAA-895 / CDC 4225-83 / SGSC4696).